Reading from the N-terminus, the 85-residue chain is Glutaredoxin (85 aa).

In terms of domain architecture, Glutaredoxin spans 1–85; that stretch reads MQTVTMYTGP…EGGLDGLLNP (85 aa). Cys12 and Cys15 are oxidised to a cystine.

The protein belongs to the glutaredoxin family. Monomer.

Its subcellular location is the cytoplasm. Has a glutathione-disulfide oxidoreductase activity in the presence of NADPH and glutathione reductase. Reduces low molecular weight disulfides and proteins. The sequence is that of Glutaredoxin (grx) from Neisseria meningitidis serogroup B (strain ATCC BAA-335 / MC58).